A 414-amino-acid polypeptide reads, in one-letter code: Eukaryotic initiation factor 4A-1 (414 aa).

The Q motif motif lies at 41–69 (ESFDDMGLQENLLRGIYAYGFEKPSAIQQ). One can recognise a Helicase ATP-binding domain in the interval 72–242 (IVPFCKGLDV…RKFMNKPVRI (171 aa)). 85-92 (AQSGTGKT) is a binding site for ATP. The DEAD box signature appears at 190-193 (DEAD). In terms of domain architecture, Helicase C-terminal spans 253 to 414 (GIKQFYVNVE…ELPANVADLL (162 aa)).

Belongs to the DEAD box helicase family. eIF4A subfamily. EIF4F is a multi-subunit complex, the composition of which varies with external and internal environmental conditions. It is composed of at least EIF4A, EIF4E and EIF4G.

The enzyme catalyses ATP + H2O = ADP + phosphate + H(+). Its function is as follows. ATP-dependent RNA helicase which is a subunit of the eIF4F complex involved in cap recognition and is required for mRNA binding to ribosome. In the current model of translation initiation, eIF4A unwinds RNA secondary structures in the 5'-UTR of mRNAs which is necessary to allow efficient binding of the small ribosomal subunit, and subsequent scanning for the initiator codon. This chain is Eukaryotic initiation factor 4A-1, found in Oryza sativa subsp. japonica (Rice).